The following is a 33-amino-acid chain: Photosystem II reaction center protein Psb30 (33 aa).

Residues 5 to 25 traverse the membrane as a helical segment; that stretch reads LIAQLTFLTSIIVSGPLVIAL.

The protein belongs to the Psb30/Ycf12 family. PSII is composed of 1 copy each of membrane proteins PsbA, PsbB, PsbC, PsbD, PsbE, PsbF, PsbH, PsbI, PsbJ, PsbK, PsbL, PsbM, PsbT, PsbX, PsbY, PsbZ, Psb30/Ycf12, peripheral proteins of the oxygen-evolving complex and a large number of cofactors. It forms dimeric complexes.

Its subcellular location is the plastid. The protein localises to the chloroplast thylakoid membrane. In terms of biological role, a core subunit of photosystem II (PSII), probably helps stabilize the reaction center. The sequence is that of Photosystem II reaction center protein Psb30 from Psilotum nudum (Whisk fern).